Here is a 457-residue protein sequence, read N- to C-terminus: MDITYDDLPVEIWIRILKFMKDSAVNLVLVNTDFFKLIYFKKNKFYELKEFNFGMQKNYVKQRITLINYVVEKGYLDIIVYINNLKSNHNPLIIDNIKILGSISKDTALWYSCKNNNLATTKYFINKGASINSSSLPLKTACIEGHLDTVKYLFSCGIEIINSIYDCIVSACCYGRLNIVIYLSNKISIPGDYINEAFVMACKYGYLDIAKYLFNLDCSITVDALYGACINGHIEVVEYLIGLGVDPRKEKCWAITSACQGGHLNIIEFLLSLGIKPKEINVDAFYHACKTGNLEIAKYLKEIGADTITRRDWALELSARGGYLDVVKYIIELGVSQKSLNKALIDATLFCRVEVVEYLVDSGSDFRQNDDYLFRSIICTRDYVEMAEYFIMKGVNIIVNNNEPIKTVCHNGCIGILKLLIMYGVDYNPIKDQLINIAKSNNQSAIIKYLEDLDTLK.

ANK repeat units follow at residues 62 to 91 (QRIT…NHNP), 104 to 132 (SKDT…ASIN), 133 to 162 (SSSL…EIIN), 193 to 219 (YINE…LDCS), 220 to 249 (ITVD…DPRK), 251 to 279 (KCWA…KPKE), 281 to 309 (NVDA…DTIT), 310 to 339 (RRDW…SQKS), 341 to 368 (NKAL…DFRQ), 400 to 429 (NNNE…DYNP), and 431 to 457 (KDQL…DTLK).

The sequence is that of Putative ankyrin repeat protein L112 from Acanthamoeba polyphaga mimivirus (APMV).